The following is a 196-amino-acid chain: Fucoxanthin-chlorophyll a-c binding protein A, chloroplastic (196 aa).

Residues 1 to 31 constitute a chloroplast transit peptide; sequence MKFAVFASLLASRAAFAPAQQSARTSVATNM. The next 3 membrane-spanning stretches (helical) occupy residues 73 to 94, 114 to 134, and 174 to 196; these read ICMLAVAGYLTQEAGIRLPGDI, VPGAGIAQIIAFIGFFEIAVM, and GRAAQMGILALMVHEQLGVSILP.

Belongs to the fucoxanthin chlorophyll protein family. The LHC complex of chromophytic algae is composed of fucoxanthin, chlorophyll A and C bound non-covalently by fucoxanthin chlorophyll proteins (FCPs). The ratio of the pigments in LHC; fucoxanthin: chlorophyll C: chlorophyll A; (0.6-1): (0.1-0.3): (1).

It localises to the plastid. The protein localises to the chloroplast thylakoid membrane. In terms of biological role, the light-harvesting complex (LHC) functions as a light receptor, it captures and delivers excitation energy to photosystems with which it is closely associated. Energy is transferred from the carotenoid and chlorophyll C (or B) to chlorophyll A and the photosynthetic reaction centers where it is used to synthesize ATP and reducing power. The sequence is that of Fucoxanthin-chlorophyll a-c binding protein A, chloroplastic (FCPA) from Phaeodactylum tricornutum (Diatom).